We begin with the raw amino-acid sequence, 327 residues long: Methionine import ATP-binding protein MetN (327 aa).

The ABC transporter domain maps to 3 to 239; the sequence is VELKNIEKIY…PKHAVTKELL (237 aa). 36-43 contacts ATP; it reads GYSGAGKS.

This sequence belongs to the ABC transporter superfamily. Methionine importer (TC 3.A.1.24) family. In terms of assembly, the complex is composed of two ATP-binding proteins (MetN), two transmembrane proteins (MetI) and a solute-binding protein (MetQ).

It localises to the cell inner membrane. It carries out the reaction L-methionine(out) + ATP + H2O = L-methionine(in) + ADP + phosphate + H(+). The enzyme catalyses D-methionine(out) + ATP + H2O = D-methionine(in) + ADP + phosphate + H(+). Its function is as follows. Part of the ABC transporter complex MetNIQ involved in methionine import. Responsible for energy coupling to the transport system. The protein is Methionine import ATP-binding protein MetN of Helicobacter pylori (strain HPAG1).